We begin with the raw amino-acid sequence, 330 residues long: D-lactate dehydrogenase (330 aa).

NAD(+)-binding positions include 156–157 (RI), Asp176, 206–207 (VP), 233–235 (AAR), and Asp259. Arg235 is a catalytic residue. Residue Glu264 is part of the active site. The Proton donor role is filled by His296.

This sequence belongs to the D-isomer specific 2-hydroxyacid dehydrogenase family.

The catalysed reaction is (R)-lactate + NAD(+) = pyruvate + NADH + H(+). The protein is D-lactate dehydrogenase (ldhD) of Staphylococcus aureus.